Here is a 202-residue protein sequence, read N- to C-terminus: MRLAAENLSGERGGETVFSGVSFALGQSETLLVTGPNGAGKSTLLRIIAGLLPVAKGHVAFSGGGEIFPDAGAACHYLGHLNGMKPALSIEENLVFWRDFLGEERLSPLEALEIVGLGEIAHLPFGYLSTGQRRRTAIARLLVSYRPVWLLDEPTAGLDRASEAQFAEVMRAHLSAGGIIVAATHLPLGLEGTQELKMGAGN.

The region spanning 3 to 200 (LAAENLSGER…EGTQELKMGA (198 aa)) is the ABC transporter domain. ATP is bound at residue 35-42 (GPNGAGKS).

This sequence belongs to the ABC transporter superfamily. CcmA exporter (TC 3.A.1.107) family. The complex is composed of two ATP-binding proteins (CcmA) and two transmembrane proteins (CcmB).

It is found in the cell inner membrane. The enzyme catalyses heme b(in) + ATP + H2O = heme b(out) + ADP + phosphate + H(+). Functionally, part of the ABC transporter complex CcmAB involved in the biogenesis of c-type cytochromes; once thought to export heme, this seems not to be the case, but its exact role is uncertain. Responsible for energy coupling to the transport system. This is Cytochrome c biogenesis ATP-binding export protein CcmA from Chelativorans sp. (strain BNC1).